Reading from the N-terminus, the 356-residue chain is GTPase Obg (356 aa).

Residues M1–I159 form the Obg domain. The region spanning A160–G327 is the OBG-type G domain. GTP-binding positions include G166–S173, F191–H195, D212–G215, N279–D282, and S308–A310. Positions 173 and 193 each coordinate Mg(2+). The segment at G327 to G356 is disordered.

This sequence belongs to the TRAFAC class OBG-HflX-like GTPase superfamily. OBG GTPase family. In terms of assembly, monomer. The cofactor is Mg(2+).

It localises to the cytoplasm. Functionally, an essential GTPase which binds GTP, GDP and possibly (p)ppGpp with moderate affinity, with high nucleotide exchange rates and a fairly low GTP hydrolysis rate. Plays a role in control of the cell cycle, stress response, ribosome biogenesis and in those bacteria that undergo differentiation, in morphogenesis control. In Bradyrhizobium sp. (strain ORS 278), this protein is GTPase Obg.